Reading from the N-terminus, the 330-residue chain is Carbonic anhydrase 1 (330 aa).

A chloroplast transit peptide-like region spans residues 1 to 109; sequence MSTASAFAIN…AAARIDQITA (109 aa).

This sequence belongs to the beta-class carbonic anhydrase family. Homohexamer.

Its subcellular location is the cytoplasm. The enzyme catalyses hydrogencarbonate + H(+) = CO2 + H2O. Reversible hydration of carbon dioxide. The sequence is that of Carbonic anhydrase 1 from Flaveria linearis (Narrowleaf yellowtops).